The primary structure comprises 718 residues: Polyribonucleotide nucleotidyltransferase (718 aa).

Aspartate 506 and aspartate 512 together coordinate Mg(2+). Residues 572 to 632 (PKLELFSVDP…EQIKAAKDYI (61 aa)) form the KH domain. An S1 motif domain is found at 657 to 718 (GQEFQGIVKK…NGKISVDLCE (62 aa)).

This sequence belongs to the polyribonucleotide nucleotidyltransferase family. Mg(2+) serves as cofactor.

The protein localises to the cytoplasm. The enzyme catalyses RNA(n+1) + phosphate = RNA(n) + a ribonucleoside 5'-diphosphate. Functionally, involved in mRNA degradation. Catalyzes the phosphorolysis of single-stranded polyribonucleotides processively in the 3'- to 5'-direction. The sequence is that of Polyribonucleotide nucleotidyltransferase from Campylobacter jejuni subsp. doylei (strain ATCC BAA-1458 / RM4099 / 269.97).